The chain runs to 737 residues: 1,4-alpha-glucan branching enzyme GlgB (737 aa).

Catalysis depends on D399, which acts as the Nucleophile. The active-site Proton donor is the E452.

The protein belongs to the glycosyl hydrolase 13 family. GlgB subfamily. In terms of assembly, monomer.

The enzyme catalyses Transfers a segment of a (1-&gt;4)-alpha-D-glucan chain to a primary hydroxy group in a similar glucan chain.. It participates in glycan biosynthesis; glycogen biosynthesis. In terms of biological role, catalyzes the formation of the alpha-1,6-glucosidic linkages in glycogen by scission of a 1,4-alpha-linked oligosaccharide from growing alpha-1,4-glucan chains and the subsequent attachment of the oligosaccharide to the alpha-1,6 position. The polypeptide is 1,4-alpha-glucan branching enzyme GlgB (Chlamydia muridarum (strain MoPn / Nigg)).